The sequence spans 187 residues: NADH-quinone oxidoreductase subunit C 2 (187 aa).

Positions tyrosine 153–serine 187 are disordered.

Belongs to the complex I 30 kDa subunit family. As to quaternary structure, NDH-1 is composed of 14 different subunits. Subunits NuoB, C, D, E, F, and G constitute the peripheral sector of the complex.

The protein resides in the cell inner membrane. The catalysed reaction is a quinone + NADH + 5 H(+)(in) = a quinol + NAD(+) + 4 H(+)(out). Functionally, NDH-1 shuttles electrons from NADH, via FMN and iron-sulfur (Fe-S) centers, to quinones in the respiratory chain. The immediate electron acceptor for the enzyme in this species is believed to be ubiquinone. Couples the redox reaction to proton translocation (for every two electrons transferred, four hydrogen ions are translocated across the cytoplasmic membrane), and thus conserves the redox energy in a proton gradient. The protein is NADH-quinone oxidoreductase subunit C 2 of Rhizobium etli (strain CIAT 652).